The sequence spans 320 residues: Stress-involved WYL domain-containing regulator (320 aa).

Residues 7–65 (TTGRVVQLLGLLQSRRVWTGEELAERLGVTGRSVRRDIERLRELGYPVHASKGQGGGYQ) enclose the HTH deoR-type domain. A DNA-binding region (H-T-H motif) is located at residues 24-43 (WTGEELAERLGVTGRSVRRD). Positions 139–218 (DTAVAPDVLM…SDVRATGTTF (80 aa)) constitute a WYL domain. The segment at 245–320 (VRYFAPEKVV…MADRLRRAVR (76 aa)) is WCX domain.

Homodimer.

Transcriptional activator. Acts as a transcriptional activator of the MSMEG_1357-56 operon upon genotoxic stress. Controls adjacent genes that belong to the DinB/YfiT-like putative metalloenzymes superfamily by upregulating their expression in response to various genotoxic stress conditions, including exposure to H(2)O(2) or the natural antibiotic zeocin, as well as mitomycin C (MMC), diamide and UVC radiation. Upon genotoxic stress, upregulates two genes encoding proteins of the DinB/YfiT-like putative metalloenzymes superfamily, MSMEG_1357 and MSMEG_1356. Binds different forms of single-stranded DNA (ssDNA) with high affinity, primarily through its characteristic WYL domain. Binds nucleic acids with single-stranded regions, such as polyT 20mer ssDNA, 5' tailed, 3' tailed and fork DNA, but not ssRNA. In Mycolicibacterium smegmatis (strain ATCC 700084 / mc(2)155) (Mycobacterium smegmatis), this protein is Stress-involved WYL domain-containing regulator.